Here is a 388-residue protein sequence, read N- to C-terminus: Large ribosomal subunit protein uL3A (388 aa).

Residues 1–10 (MSHCKFEQPR) show a composition bias toward basic and acidic residues. The tract at residues 1–34 (MSHCKFEQPRHGSLGFLPRKRASRQRGKVKAFPK) is disordered. S13 is subject to Phosphoserine. A compositionally biased stretch (basic residues) spans 18 to 31 (PRKRASRQRGKVKA). Phosphoserine is present on residues S65, S140, S143, S207, S295, and S355. Phosphothreonine is present on T372.

It belongs to the universal ribosomal protein uL3 family. In terms of assembly, component of the large ribosomal subunit (LSU). Mature yeast ribosomes consist of a small (40S) and a large (60S) subunit. The 40S small subunit contains 1 molecule of ribosomal RNA (18S rRNA) and at least 33 different proteins. The large 60S subunit contains 3 rRNA molecules (25S, 5.8S and 5S rRNA) and at least 46 different proteins. uL3 forms together with ES39L one of the contact sites for the signal recognition particle that targets ribosomes to the endoplasmic reticulum membrane.

Its subcellular location is the cytoplasm. Component of the ribosome, a large ribonucleoprotein complex responsible for the synthesis of proteins in the cell. The small ribosomal subunit (SSU) binds messenger RNAs (mRNAs) and translates the encoded message by selecting cognate aminoacyl-transfer RNA (tRNA) molecules. The large subunit (LSU) contains the ribosomal catalytic site termed the peptidyl transferase center (PTC), which catalyzes the formation of peptide bonds, thereby polymerizing the amino acids delivered by tRNAs into a polypeptide chain. The nascent polypeptides leave the ribosome through a tunnel in the LSU and interact with protein factors that function in enzymatic processing, targeting, and the membrane insertion of nascent chains at the exit of the ribosomal tunnel. uL3 plays a role in coordinating processes of accommodating the aminoacyl-tRNA in the PTC. The chain is Large ribosomal subunit protein uL3A (rpl301) from Schizosaccharomyces pombe (strain 972 / ATCC 24843) (Fission yeast).